The chain runs to 326 residues: Adenosine receptor A1 (326 aa).

Residues 1-10 (MPHSVSAFQA) are Extracellular-facing. A helical transmembrane segment spans residues 11 to 33 (AYIGIEVLIALVSVPGNVLVIWA). Topologically, residues 34–46 (VKVNQALRDATFC) are cytoplasmic. The helical transmembrane segment at 47–69 (FIASLAVADVAVGALVIPLAILI) threads the bilayer. The Extracellular segment spans residues 70 to 80 (NIGPQTYFHTC). A disulfide bond links Cys-80 and Cys-169. A helical membrane pass occupies residues 81-102 (LMVACPVLILTQSSILALLAIA). The Cytoplasmic portion of the chain corresponds to 103 to 123 (VDRYLRVKIPLRYKTVVTPRR). Residues 124–146 (AAVAIAGCWILSLVVGLTPMFGW) form a helical membrane-spanning segment. Residues 147–176 (NNLSKIEMAWAANGSVGEPVIKCEFEKVIS) lie on the Extracellular side of the membrane. Residue Asn-159 is glycosylated (N-linked (GlcNAc...) asparagine). Residues 177 to 201 (MEYMVYFNFFVWVLPPLLLMVLIYL) form a helical membrane-spanning segment. Residues 202-235 (EVFYLIRKQLSKKVSASSGDPQKYYGKELKIAKS) are Cytoplasmic-facing. A helical membrane pass occupies residues 236–259 (LALILFLFALSWLPLHILNCITLF). At 260 to 267 (CPTCHKPT) the chain is on the extracellular side. A helical transmembrane segment spans residues 268-292 (ILTYIAIFLTHGNSAMNPIVYAFRI). The Cytoplasmic segment spans residues 293–326 (QKFRVTFLKIWNDHFRCQPEPPIDEDLPEEKVDD). A lipid anchor (S-palmitoyl cysteine) is attached at Cys-309.

The protein belongs to the G-protein coupled receptor 1 family.

It localises to the cell membrane. Receptor for adenosine. The activity of this receptor is mediated by G proteins which inhibit adenylyl cyclase. The chain is Adenosine receptor A1 (ADORA1) from Cavia porcellus (Guinea pig).